Consider the following 643-residue polypeptide: Phosphatidylinositol-3,5-bisphosphate 3-phosphatase MTMR2 (643 aa).

Polar residues-rich tracts occupy residues 1–12 and 23–40; these read MEKSSSCESLGS and DSLS…VHTK. The segment at 1–54 is disordered; the sequence is MEKSSSCESLGSQPAVARPPSVDSLSSASTSHSENSVHTKSASVVSSDSISTSA. Phosphoserine is present on residues Ser-6 and Ser-9. The span at 41-54 shows a compositional bias: low complexity; it reads SASVVSSDSISTSA. A Phosphoserine modification is found at Ser-58. The 72-residue stretch at 68–139 folds into the GRAM domain; it reads NKLAEMEEPP…GVISRVEKIG (72 aa). The Myotubularin phosphatase domain maps to 205–580; it reads GWKLYDSLSE…RHLELWVGYY (376 aa). Positions 330, 355, and 356 each coordinate a 1,2-diacyl-sn-glycero-3-phospho-(1D-myo-inositol-3,5-bisphosphate). Residues Asn-330, Asn-355, and Ile-356 each contribute to the a 1,2-diacyl-sn-glycero-3-phospho-(1D-myo-inositol-3-phosphate) site. The active-site Phosphocysteine intermediate is Cys-417. Residues Ser-418, Asp-419, Gly-420, Trp-421, Asp-422, Arg-423, Arg-459, and Arg-463 each coordinate a 1,2-diacyl-sn-glycero-3-phospho-(1D-myo-inositol-3,5-bisphosphate). A 1,2-diacyl-sn-glycero-3-phospho-(1D-myo-inositol-3-phosphate)-binding residues include Ser-418, Asp-419, Gly-420, Trp-421, Asp-422, and Arg-423. A 1,2-diacyl-sn-glycero-3-phospho-(1D-myo-inositol-3-phosphate) is bound at residue Arg-463. A coiled-coil region spans residues 593-627; that stretch reads IHNRYKELLAKRAELQKKVEELQREISNRSTSSSE. The interval 614-643 is disordered; sequence LQREISNRSTSSSERAGSPAQCVTPVQTVV.

It belongs to the protein-tyrosine phosphatase family. Non-receptor class myotubularin subfamily. In terms of assembly, homodimer (via coiled-coil domain). Heterotetramer consisting of one MTMR2 dimer and one SBF2/MTMR13 dimer; specifically in peripheral nerves stabilizes SBF2/MTMR13 at the membranes and increases MTMR2 catalytic activity towards phosphatidylinositol 3,5-bisphosphate and to a lesser extent towards phosphatidylinositol 3-phosphate. Heterodimer with SBF1/MTMR5; acts as an adapter for the phosphatase MTMR2 to regulate MTMR2 catalytic activity and subcellular location. Heterodimer with MTMR12. Post-translationally, phosphorylation at Ser-58 decreases MTMR2 localization to endocytic vesicular structures.

It localises to the cytoplasm. It is found in the early endosome membrane. The protein localises to the perinuclear region. The protein resides in the cell projection. Its subcellular location is the axon. It localises to the endosome membrane. The catalysed reaction is a 1,2-diacyl-sn-glycero-3-phospho-(1D-myo-inositol-3,5-bisphosphate) + H2O = a 1,2-diacyl-sn-glycero-3-phospho-(1D-myo-inositol-5-phosphate) + phosphate. The enzyme catalyses a 1,2-diacyl-sn-glycero-3-phospho-(1D-myo-inositol-3-phosphate) + H2O = a 1,2-diacyl-sn-glycero-3-phospho-(1D-myo-inositol) + phosphate. It catalyses the reaction 1,2-dioctanoyl-sn-glycero-3-phospho-(1-D-myo-inositol-3-phosphate) + H2O = 1,2-dioctanoyl-sn-glycero-3-phospho-(1D-myo-inositol) + phosphate. It carries out the reaction 1,2-dioctanoyl-sn-glycero-3-phospho-(1D-myo-inositol-3,5-bisphosphate) + H2O = 1,2-dioctanoyl-sn-glycero-3-phospho-(1D-myo-inositol-5-phosphate) + phosphate. Lipid phosphatase that specifically dephosphorylates the D-3 position of phosphatidylinositol 3-phosphate and phosphatidylinositol 3,5-bisphosphate, generating phosphatidylinositol and phosphatidylinositol 5-phosphate. Regulates the level of these phosphoinositides critical for various biological processes including autophagy initiation and autophagosome maturation. The sequence is that of Phosphatidylinositol-3,5-bisphosphate 3-phosphatase MTMR2 from Bos taurus (Bovine).